A 574-amino-acid polypeptide reads, in one-letter code: K(+)/H(+) antiporter NhaP2 (574 aa).

Helical transmembrane passes span 6–26 (INSF…LSPV), 34–54 (ILLI…GGIL), 58–78 (YSTA…DGGM), 87–107 (VALW…TSIT), 109–129 (VMAA…GAIV), 173–193 (IAIL…ISFI), 196–216 (FGLG…LVNL), 219–239 (LAEG…YAAS), 242–262 (LGGS…NKPT), 271–291 (VLDG…GLLL), 299–319 (IWLP…PLAV), 335–355 (WFIS…VFPM), and 359–379 (LPGA…SLLV). An RCK C-terminal domain is found at 405-486 (SGVEIYPSSE…LEALSNLFSQ (82 aa)).

The protein belongs to the monovalent cation:proton antiporter 1 (CPA1) transporter (TC 2.A.36) family. NhaP2 subfamily.

It is found in the cell inner membrane. It catalyses the reaction K(+)(in) + H(+)(out) = K(+)(out) + H(+)(in). K(+)/H(+) antiporter that extrudes potassium in exchange for external protons and maintains the internal concentration of potassium under toxic levels. The sequence is that of K(+)/H(+) antiporter NhaP2 from Shewanella sp. (strain ANA-3).